Here is a 129-residue protein sequence, read N- to C-terminus: Succinate dehydrogenase assembly factor 3, mitochondrial (129 aa).

The N-terminal 21 residues, 1–21, are a transit peptide targeting the mitochondrion; the sequence is MQVNHLLRQAVKQTTRAGRLG.

Belongs to the complex I LYR family. SDHAF3 subfamily. As to quaternary structure, interacts with the iron-sulfur protein subunit within the SDH catalytic dimer.

It localises to the mitochondrion matrix. Its function is as follows. Plays an essential role in the assembly of succinate dehydrogenase (SDH), an enzyme complex (also referred to as respiratory complex II) that is a component of both the tricarboxylic acid (TCA) cycle and the mitochondrial electron transport chain, and which couples the oxidation of succinate to fumarate with the reduction of ubiquinone (coenzyme Q) to ubiquinol. Promotes maturation of the iron-sulfur protein subunit of the SDH catalytic dimer, protecting it from the deleterious effects of oxidants. May act together with SDHAF1. This Kluyveromyces lactis (strain ATCC 8585 / CBS 2359 / DSM 70799 / NBRC 1267 / NRRL Y-1140 / WM37) (Yeast) protein is Succinate dehydrogenase assembly factor 3, mitochondrial.